Here is a 707-residue protein sequence, read N- to C-terminus: D-(-)-3-hydroxybutyrate oligomer hydrolase (707 aa).

The signal sequence occupies residues 1–32; it reads MASVFKVRSASGHVPVVRTLAAMMAVTVVLTA. Ser321 (charge relay system) is an active-site residue.

Belongs to the D-(-)-3-hydroxybutyrate oligomer hydrolase family.

It localises to the secreted. The catalysed reaction is (3R)-hydroxybutanoate dimer + H2O = 2 (R)-3-hydroxybutanoate + H(+). Its pathway is lipid metabolism; butanoate metabolism. Functionally, participates in the degradation of poly-3-hydroxybutyrate (PHB). It works downstream of poly(3-hydroxybutyrate) depolymerase, hydrolyzing D(-)-3-hydroxybutyrate oligomers of various length (3HB-oligomers) into 3HB-monomers. The protein is D-(-)-3-hydroxybutyrate oligomer hydrolase of Paraburkholderia xenovorans (strain LB400).